The following is a 281-amino-acid chain: 4-hydroxy-3-methylbut-2-enyl diphosphate reductase (281 aa).

Cysteine 12 provides a ligand contact to [4Fe-4S] cluster. (2E)-4-hydroxy-3-methylbut-2-enyl diphosphate is bound by residues histidine 41 and histidine 74. Residues histidine 41 and histidine 74 each contribute to the dimethylallyl diphosphate site. 2 residues coordinate isopentenyl diphosphate: histidine 41 and histidine 74. Cysteine 96 contributes to the [4Fe-4S] cluster binding site. Histidine 124 provides a ligand contact to (2E)-4-hydroxy-3-methylbut-2-enyl diphosphate. Histidine 124 is a dimethylallyl diphosphate binding site. Histidine 124 provides a ligand contact to isopentenyl diphosphate. The active-site Proton donor is the glutamate 126. Residue threonine 164 coordinates (2E)-4-hydroxy-3-methylbut-2-enyl diphosphate. Cysteine 193 contributes to the [4Fe-4S] cluster binding site. The (2E)-4-hydroxy-3-methylbut-2-enyl diphosphate site is built by serine 221, asparagine 223, and serine 265. Dimethylallyl diphosphate is bound by residues serine 221, asparagine 223, and serine 265. Positions 221, 223, and 265 each coordinate isopentenyl diphosphate.

It belongs to the IspH family. It depends on [4Fe-4S] cluster as a cofactor.

It carries out the reaction isopentenyl diphosphate + 2 oxidized [2Fe-2S]-[ferredoxin] + H2O = (2E)-4-hydroxy-3-methylbut-2-enyl diphosphate + 2 reduced [2Fe-2S]-[ferredoxin] + 2 H(+). The catalysed reaction is dimethylallyl diphosphate + 2 oxidized [2Fe-2S]-[ferredoxin] + H2O = (2E)-4-hydroxy-3-methylbut-2-enyl diphosphate + 2 reduced [2Fe-2S]-[ferredoxin] + 2 H(+). It participates in isoprenoid biosynthesis; dimethylallyl diphosphate biosynthesis; dimethylallyl diphosphate from (2E)-4-hydroxy-3-methylbutenyl diphosphate: step 1/1. The protein operates within isoprenoid biosynthesis; isopentenyl diphosphate biosynthesis via DXP pathway; isopentenyl diphosphate from 1-deoxy-D-xylulose 5-phosphate: step 6/6. Functionally, catalyzes the conversion of 1-hydroxy-2-methyl-2-(E)-butenyl 4-diphosphate (HMBPP) into a mixture of isopentenyl diphosphate (IPP) and dimethylallyl diphosphate (DMAPP). Acts in the terminal step of the DOXP/MEP pathway for isoprenoid precursor biosynthesis. This chain is 4-hydroxy-3-methylbut-2-enyl diphosphate reductase, found in Nitratidesulfovibrio vulgaris (strain DSM 19637 / Miyazaki F) (Desulfovibrio vulgaris).